Here is a 58-residue protein sequence, read N- to C-terminus: MAVPARHTSSAKKNRRRTHYKLTAPTVTFDETTGDYRHSHRVSLKGYYKGRKVRDDTK.

A disordered region spans residues 1-23; sequence MAVPARHTSSAKKNRRRTHYKLT. The span at 9-20 shows a compositional bias: basic residues; that stretch reads SSAKKNRRRTHY.

Belongs to the bacterial ribosomal protein bL32 family.

This chain is Large ribosomal subunit protein bL32 (rpmF), found in Lactococcus lactis subsp. cremoris (Streptococcus cremoris).